The primary structure comprises 853 residues: DNA (cytosine-5)-methyltransferase 3B (853 aa).

Over residues 1-20 (MKGDTRHLNGEEDAGGREDS) the composition is skewed to basic and acidic residues. Residues 1-218 (MKGDTRHLNG…SGDGDSSEYQ (218 aa)) are disordered. Residues 1–298 (MKGDTRHLNG…LATFNKLVSY (298 aa)) form an interaction with DNMT1 and DNMT3A region. Over residues 72-81 (GDGDGEDGDG) the composition is skewed to acidic residues. S82 is subject to Phosphoserine. K89 participates in a covalent cross-link: Glycyl lysine isopeptide (Lys-Gly) (interchain with G-Cter in SUMO2). Position 96 is a phosphothreonine (T96). Residues S100 and S110 each carry the phosphoserine modification. The segment covering 115 to 130 (ERHRPSPRSTRGRQGR) has biased composition (basic residues). Phosphoserine is present on residues S136, S195, S202, and S209. The segment covering 179–199 (GTPQSSSTPYARLAQDSQQGG) has biased composition (polar residues). Residues 225-283 (IGDLVWGKIKGFSWWPAMVVSWKATSKRQAMSGMRWVQWFGDGKFSEVSADKLVALGLF) enclose the PWWP domain. The disordered stretch occupies residues 341–423 (KPTGIEGLKP…DQSREQMASD (83 aa)). 2 stretches are compositionally biased toward basic and acidic residues: residues 368–385 (RKLE…RTAD) and 407–417 (GKDRGDEDQSR). R410 bears the Citrulline mark. An ADD domain is found at 423 to 555 (DVANNKSSLE…LQAFFTSDTG (133 aa)). The GATA-type; atypical zinc-finger motif lies at 434–464 (GCLSCGRKNPVSFHPLFEGGLCQTCRDRFLE). Residues 435–527 (CLSCGRKNPV…LQEPWSCYMC (93 aa)) form an interaction with the PRC2/EED-EZH2 complex region. Residues 475–531 (QSYCTVCCEGRELLLCSNTSCCRCFCVECLEVLVGTGTAAEAKLQEPWSCYMCLPQR) form a PHD-type; atypical zinc finger. One can recognise an SAM-dependent MTase C5-type domain in the interval 575-853 (IRVLSLFDGI…APLKDYFACE (279 aa)). S-adenosyl-L-methionine contacts are provided by residues 582–586 (DGIAT) and E605. Residue K617 forms a Glycyl lysine isopeptide (Lys-Gly) (interchain with G-Cter in SUMO2) linkage. Residue 627–629 (DVR) coordinates S-adenosyl-L-methionine. C651 is a catalytic residue. Position 832–834 (832–834 (RSW)) interacts with S-adenosyl-L-methionine.

It belongs to the class I-like SAM-binding methyltransferase superfamily. C5-methyltransferase family. Interacts with BAZ2A/TIP5, SUV39H1 and CBX4. Interacts with UHRF1. Interacts with DNMT1 and DNMT3A, SETDB1, UBL1, UBE2I9 and ZHX1. Interacts with the PRC2/EED-EZH2 complex. Post-translationally, sumoylated. In terms of processing, citrullinated by PADI4. Ubiquitous; highly expressed in fetal liver, heart, kidney, placenta, and at lower levels in spleen, colon, brain, liver, small intestine, lung, peripheral blood mononuclear cells, and skeletal muscle. Isoform 1 is expressed in all tissues except brain, skeletal muscle and PBMC, 3 is ubiquitous, 4 is expressed in all tissues except brain, skeletal muscle, lung and prostate and 5 is detectable only in testis and at very low level in brain and prostate.

It localises to the nucleus. It carries out the reaction a 2'-deoxycytidine in DNA + S-adenosyl-L-methionine = a 5-methyl-2'-deoxycytidine in DNA + S-adenosyl-L-homocysteine + H(+). With respect to regulation, activated by binding to the regulatory factor DNMT3L. Required for genome-wide de novo methylation and is essential for the establishment of DNA methylation patterns during development. DNA methylation is coordinated with methylation of histones. May preferentially methylates nucleosomal DNA within the nucleosome core region. May function as transcriptional co-repressor by associating with CBX4 and independently of DNA methylation. Seems to be involved in gene silencing. In association with DNMT1 and via the recruitment of CTCFL/BORIS, involved in activation of BAG1 gene expression by modulating dimethylation of promoter histone H3 at H3K4 and H3K9. Isoforms 4 and 5 are probably not functional due to the deletion of two conserved methyltransferase motifs. Functions as a transcriptional corepressor by associating with ZHX1. Required for DUX4 silencing in somatic cells. This is DNA (cytosine-5)-methyltransferase 3B (DNMT3B) from Homo sapiens (Human).